The primary structure comprises 132 residues: Transmembrane protein 170B (132 aa).

Over 1 to 37 (MRAEGADHSMINLSVQQVLSLWAHGTVLRNLTEMWYW) the chain is Extracellular. An N-linked (GlcNAc...) asparagine glycan is attached at asparagine 12. A helical membrane pass occupies residues 38–58 (IFLWALFSSLFVHGAAGVLMF). The Cytoplasmic segment spans residues 59 to 68 (VMLQRHRQGR). Residues 69–89 (VISIIAVSIGFLASVTGAMIT) form a helical membrane-spanning segment. The Extracellular portion of the chain corresponds to 90 to 104 (SAAVAGIYRVAGKNM). The chain crosses the membrane as a helical span at residues 105 to 125 (APLEALVWGVGQTVLTLIISF). Topologically, residues 126–132 (SRILATL) are cytoplasmic.

The protein belongs to the TMEM170 family. In terms of assembly, interacts with CTNNB1.

The protein localises to the cell membrane. In Mus musculus (Mouse), this protein is Transmembrane protein 170B.